Here is a 64-residue protein sequence, read N- to C-terminus: Large ribosomal subunit protein bL35 (64 aa).

This sequence belongs to the bacterial ribosomal protein bL35 family.

This chain is Large ribosomal subunit protein bL35, found in Chloroherpeton thalassium (strain ATCC 35110 / GB-78).